Here is a 349-residue protein sequence, read N- to C-terminus: Anthranilate phosphoribosyltransferase (349 aa).

Residues glycine 81, 84 to 85 (GD), threonine 89, 91 to 94 (NVST), 109 to 117 (KHGNRAASS), and alanine 121 contribute to the 5-phospho-alpha-D-ribose 1-diphosphate site. Residue glycine 81 participates in anthranilate binding. Serine 93 contacts Mg(2+). An anthranilate-binding site is contributed by asparagine 112. Residue arginine 167 coordinates anthranilate. 2 residues coordinate Mg(2+): aspartate 226 and glutamate 227.

It belongs to the anthranilate phosphoribosyltransferase family. As to quaternary structure, homodimer. It depends on Mg(2+) as a cofactor.

It catalyses the reaction N-(5-phospho-beta-D-ribosyl)anthranilate + diphosphate = 5-phospho-alpha-D-ribose 1-diphosphate + anthranilate. The protein operates within amino-acid biosynthesis; L-tryptophan biosynthesis; L-tryptophan from chorismate: step 2/5. Catalyzes the transfer of the phosphoribosyl group of 5-phosphorylribose-1-pyrophosphate (PRPP) to anthranilate to yield N-(5'-phosphoribosyl)-anthranilate (PRA). This Methylocella silvestris (strain DSM 15510 / CIP 108128 / LMG 27833 / NCIMB 13906 / BL2) protein is Anthranilate phosphoribosyltransferase.